Reading from the N-terminus, the 262-residue chain is 5'-nucleotidase SurE (262 aa).

A divalent metal cation-binding residues include D8, D9, S39, and N91.

Belongs to the SurE nucleotidase family. A divalent metal cation is required as a cofactor.

It localises to the cytoplasm. It catalyses the reaction a ribonucleoside 5'-phosphate + H2O = a ribonucleoside + phosphate. In terms of biological role, nucleotidase that shows phosphatase activity on nucleoside 5'-monophosphates. This chain is 5'-nucleotidase SurE, found in Geobacter sulfurreducens (strain ATCC 51573 / DSM 12127 / PCA).